A 67-amino-acid polypeptide reads, in one-letter code: Sec-independent protein translocase protein TatA (67 aa).

The chain crosses the membrane as a helical span at residues 1 to 21 (MGSFSLTHWIIVLIIVVLIFG). The tract at residues 43 to 67 (LNEGTDGKEAQKDDVIEHKKDEDKA) is disordered. Residues 47-67 (TDGKEAQKDDVIEHKKDEDKA) show a composition bias toward basic and acidic residues.

Belongs to the TatA/E family. In terms of assembly, the Tat system comprises two distinct complexes: a TatABC complex, containing multiple copies of TatA, TatB and TatC subunits, and a separate TatA complex, containing only TatA subunits. Substrates initially bind to the TatABC complex, which probably triggers association of the separate TatA complex to form the active translocon.

It is found in the cell inner membrane. Its function is as follows. Part of the twin-arginine translocation (Tat) system that transports large folded proteins containing a characteristic twin-arginine motif in their signal peptide across membranes. TatA could form the protein-conducting channel of the Tat system. The sequence is that of Sec-independent protein translocase protein TatA from Neisseria gonorrhoeae (strain ATCC 700825 / FA 1090).